We begin with the raw amino-acid sequence, 268 residues long: tRNA threonylcarbamoyladenosine dehydratase (268 aa).

The chain crosses the membrane as a helical span at residues Gly237–Leu257.

This sequence belongs to the HesA/MoeB/ThiF family. Interacts with CsdE.

Its subcellular location is the membrane. Its function is as follows. Catalyzes the ATP-dependent dehydration of threonylcarbamoyladenosine at position 37 (t(6)A37) to form cyclic t(6)A37 (ct(6)A37) in tRNAs that read codons beginning with adenine. TcdA is also part of a sulfur transfer pathway; is able to accept sulfur from CsdA directly in vitro, but CsdE might act as the sulfur donor in vivo. This Escherichia coli (strain K12) protein is tRNA threonylcarbamoyladenosine dehydratase (tcdA).